Consider the following 126-residue polypeptide: Large ribosomal subunit protein bL19 (126 aa).

The protein belongs to the bacterial ribosomal protein bL19 family.

Its function is as follows. This protein is located at the 30S-50S ribosomal subunit interface and may play a role in the structure and function of the aminoacyl-tRNA binding site. In Bordetella petrii (strain ATCC BAA-461 / DSM 12804 / CCUG 43448), this protein is Large ribosomal subunit protein bL19.